We begin with the raw amino-acid sequence, 208 residues long: Uracil phosphoribosyltransferase (208 aa).

5-phospho-alpha-D-ribose 1-diphosphate contacts are provided by residues arginine 78, arginine 103, and 130–138 (DPMLATGGS). Residues isoleucine 193 and 198–200 (GDA) each bind uracil. Aspartate 199 contacts 5-phospho-alpha-D-ribose 1-diphosphate.

This sequence belongs to the UPRTase family. It depends on Mg(2+) as a cofactor.

The catalysed reaction is UMP + diphosphate = 5-phospho-alpha-D-ribose 1-diphosphate + uracil. It participates in pyrimidine metabolism; UMP biosynthesis via salvage pathway; UMP from uracil: step 1/1. With respect to regulation, allosterically activated by GTP. In terms of biological role, catalyzes the conversion of uracil and 5-phospho-alpha-D-ribose 1-diphosphate (PRPP) to UMP and diphosphate. This chain is Uracil phosphoribosyltransferase, found in Yersinia enterocolitica serotype O:8 / biotype 1B (strain NCTC 13174 / 8081).